The primary structure comprises 217 residues: GrpE protein homolog 1, mitochondrial (217 aa).

Residues 1-27 (MAARCVRLARGSLPAFALSLRSSPRLL) constitute a mitochondrion transit peptide. Lysine 94 carries the post-translational modification N6-acetyllysine; alternate. At lysine 94 the chain carries N6-succinyllysine; alternate. Lysine 100 is subject to N6-acetyllysine. Lysine 120 carries the N6-succinyllysine modification. The residue at position 215 (lysine 215) is an N6-acetyllysine; alternate. The residue at position 215 (lysine 215) is an N6-succinyllysine; alternate.

The protein belongs to the GrpE family. In terms of assembly, probable component of the PAM complex at least composed of a mitochondrial HSP70 protein, GRPEL1 or GRPEL2, TIMM44, TIMM16/PAM16 and TIMM14/DNAJC19. Binds to HSP70, HSC70 and HSJ1B.

It is found in the mitochondrion matrix. Its function is as follows. Essential component of the PAM complex, a complex required for the translocation of transit peptide-containing proteins from the inner membrane into the mitochondrial matrix in an ATP-dependent manner. Seems to control the nucleotide-dependent binding of mitochondrial HSP70 to substrate proteins. This Bos taurus (Bovine) protein is GrpE protein homolog 1, mitochondrial (GRPEL1).